Reading from the N-terminus, the 471-residue chain is Mitochondrial distribution and morphology protein 10 (471 aa).

Residues 313–338 (SNSAATPPRIKNSDSQVLSNNSTDSK) are disordered. Polar residues predominate over residues 325 to 338 (SDSQVLSNNSTDSK).

The protein belongs to the MDM10 family. In terms of assembly, component of the ER-mitochondria encounter structure (ERMES) or MDM complex, composed of MMM1, MDM10, MDM12 and MDM34. Associates with the mitochondrial outer membrane sorting assembly machinery SAM(core) complex.

The protein localises to the mitochondrion outer membrane. Its function is as follows. Component of the ERMES/MDM complex, which serves as a molecular tether to connect the endoplasmic reticulum and mitochondria. Components of this complex are involved in the control of mitochondrial shape and protein biogenesis and may function in phospholipid exchange. MDM10 is involved in the late assembly steps of the general translocase of the mitochondrial outer membrane (TOM complex). Functions in the TOM40-specific route of the assembly of outer membrane beta-barrel proteins, including the association of TOM40 with the receptor TOM22 and small TOM proteins. Can associate with the SAM(core) complex as well as the MDM12-MMM1 complex, both involved in late steps of the major beta-barrel assembly pathway, that is responsible for biogenesis of all outer membrane beta-barrel proteins. May act as a switch that shuttles between both complexes and channels precursor proteins into the TOM40-specific pathway. Plays a role in mitochondrial morphology and in the inheritance of mitochondria. The chain is Mitochondrial distribution and morphology protein 10 from Debaryomyces hansenii (strain ATCC 36239 / CBS 767 / BCRC 21394 / JCM 1990 / NBRC 0083 / IGC 2968) (Yeast).